A 393-amino-acid polypeptide reads, in one-letter code: Chorismate synthase (393 aa).

Arg40 and Arg46 together coordinate NADP(+). Residues 129–131 (RSS), 249–250 (QA), Gly301, 316–320 (KPIPT), and Arg342 contribute to the FMN site.

This sequence belongs to the chorismate synthase family. In terms of assembly, homotetramer. FMNH2 serves as cofactor.

It catalyses the reaction 5-O-(1-carboxyvinyl)-3-phosphoshikimate = chorismate + phosphate. It functions in the pathway metabolic intermediate biosynthesis; chorismate biosynthesis; chorismate from D-erythrose 4-phosphate and phosphoenolpyruvate: step 7/7. In terms of biological role, catalyzes the anti-1,4-elimination of the C-3 phosphate and the C-6 proR hydrogen from 5-enolpyruvylshikimate-3-phosphate (EPSP) to yield chorismate, which is the branch point compound that serves as the starting substrate for the three terminal pathways of aromatic amino acid biosynthesis. This reaction introduces a second double bond into the aromatic ring system. This is Chorismate synthase from Geobacter metallireducens (strain ATCC 53774 / DSM 7210 / GS-15).